The following is a 269-amino-acid chain: Subtilisin Savinase (269 aa).

Gln-2 is a binding site for Ca(2+). A Peptidase S8 domain is found at 5-268 (PWGISRVQAP…SGLVNAEAAT (264 aa)). Asp-32 acts as the Charge relay system in catalysis. Ca(2+) is bound at residue Asp-40. His-62 serves as the catalytic Charge relay system. Residues Leu-73, Asn-75, Ile-77, Val-79, Ala-163, Tyr-165, and Ala-168 each contribute to the Ca(2+) site. Residue Ser-215 is the Charge relay system of the active site.

Belongs to the peptidase S8 family. Ca(2+) serves as cofactor.

The protein localises to the secreted. It catalyses the reaction Hydrolysis of proteins with broad specificity for peptide bonds, and a preference for a large uncharged residue in P1. Hydrolyzes peptide amides.. Subtilisin is an extracellular alkaline serine protease, it catalyzes the hydrolysis of proteins and peptide amides. In Lederbergia lenta (Bacillus lentus), this protein is Subtilisin Savinase.